The primary structure comprises 444 residues: Protein kinase C and casein kinase substrate in neurons protein 1 (444 aa).

Phosphoserine occurs at positions 2 and 79. The F-BAR domain maps to 13–283 (EETTDSFWEV…AIRGADAQED (271 aa)). Positions 26 to 275 (KRTVKRIDDG…HVYRELEQAI (250 aa)) form a coiled coil. 2 disordered regions span residues 173–194 (REMN…LQDK) and 309–386 (LPHT…DDSK). Thr-184 is subject to Phosphothreonine. Over residues 314 to 324 (TKKEKQPKKAE) the composition is skewed to basic and acidic residues. Residues 329 to 351 (TNATGAVESTSQAGDRGSVSSYD) are compositionally biased toward polar residues. Phosphoserine occurs at positions 346, 348, 349, 361, and 365. The 60-residue stretch at 385–444 (SKGVRVRALYDYDGQEQDELSFKAGDELTKLGEEDEQGWCRGRLDSGQLGLYPANYVEAI) folds into the SH3 domain. Tyr-394 carries the phosphotyrosine modification. Residues Ser-405 and Ser-430 each carry the phosphoserine modification.

It belongs to the PACSIN family. In terms of assembly, homodimer. May form heterooligomers with other PACSINs. Interacts with both COBL and DBNL. Identified in a complex composed of COBL, PACSIN1 and WASL. Interacts (via SH3 domain) with SYNJ1 and WASL. Interacts (via SH3 domain) with DNM1; the interaction is reduced by DNM1 phosphorylation. Interacts with DNM2 and DNM3. Interacts with MAPT. Interacts with EHD1 and EHD3. Interacts with TRPV4. In terms of processing, phosphorylated by casein kinase 2 (CK2) and protein kinase C (PKC).

It is found in the cytoplasm. The protein resides in the cell projection. The protein localises to the synapse. Its subcellular location is the synaptosome. It localises to the ruffle membrane. It is found in the membrane. The protein resides in the cytoplasmic vesicle membrane. The protein localises to the cytosol. Its subcellular location is the cell membrane. Binds to membranes via its F-BAR domain and mediates membrane tubulation. Plays a role in the reorganization of the microtubule cytoskeleton via its interaction with MAPT; this decreases microtubule stability and inhibits MAPT-induced microtubule polymerization. Plays a role in cellular transport processes by recruiting DNM1, DNM2 and DNM3 to membranes. Plays a role in the reorganization of the actin cytoskeleton and in neuron morphogenesis via its interaction with COBL and WASL, and by recruiting COBL to the cell cortex. Plays a role in the regulation of neurite formation, neurite branching and the regulation of neurite length. Required for normal synaptic vesicle endocytosis; this process retrieves previously released neurotransmitters to accommodate multiple cycles of neurotransmission. Required for normal excitatory and inhibitory synaptic transmission. The sequence is that of Protein kinase C and casein kinase substrate in neurons protein 1 (Pacsin1) from Pongo abelii (Sumatran orangutan).